The chain runs to 249 residues: DnaJ homolog subfamily C member 5 homolog (249 aa).

S12 bears the Phosphoserine mark. At T13 the chain carries Phosphothreonine. S14 and S17 each carry phosphoserine. In terms of domain architecture, J spans 15–84 (GDSLYEILGL…RNIYDNYGSL (70 aa)). Y19 bears the Phosphotyrosine mark. Basic and acidic residues predominate over residues 146–162 (HDQYSHLNRPDGNREGN). Disordered regions lie at residues 146-177 (HDQYSHLNRPDGNREGNDMPTHLGQPPRLEDV) and 218-249 (PFTGAPVAANENTSLNTTEQTTYTPDMVNQKY). Over residues 227–241 (NENTSLNTTEQTTYT) the composition is skewed to polar residues.

In terms of processing, fatty acylated. Heavily palmitoylated in the cysteine string motif. As to expression, expressed in wide range of synaptic terminals: embryonic nervous system, larval neuromuscular junctions, adult visual system (neuropil of optic ganglia and terminal of R1-8 photoreceptors) and thoracic neuromuscular junctions. Also expressed in non-neuronal cells: follicle cells, spermatheca, testis and ejaculatory bulb. Low level of expression is found in many neuronal and non-neuronal tissues.

It is found in the membrane. Its function is as follows. May have an important role in presynaptic function. The protein is DnaJ homolog subfamily C member 5 homolog of Drosophila melanogaster (Fruit fly).